The primary structure comprises 211 residues: FMN-dependent NADH:quinone oxidoreductase 2 (211 aa).

102–105 (MWNF) provides a ligand contact to FMN.

The protein belongs to the azoreductase type 1 family. Homodimer. FMN is required as a cofactor.

The enzyme catalyses 2 a quinone + NADH + H(+) = 2 a 1,4-benzosemiquinone + NAD(+). It catalyses the reaction N,N-dimethyl-1,4-phenylenediamine + anthranilate + 2 NAD(+) = 2-(4-dimethylaminophenyl)diazenylbenzoate + 2 NADH + 2 H(+). Quinone reductase that provides resistance to thiol-specific stress caused by electrophilic quinones. Its function is as follows. Also exhibits azoreductase activity. Catalyzes the reductive cleavage of the azo bond in aromatic azo compounds to the corresponding amines. The protein is FMN-dependent NADH:quinone oxidoreductase 2 of Bacillus cereus (strain ATCC 14579 / DSM 31 / CCUG 7414 / JCM 2152 / NBRC 15305 / NCIMB 9373 / NCTC 2599 / NRRL B-3711).